Consider the following 173-residue polypeptide: 2-C-methyl-D-erythritol 2,4-cyclodiphosphate synthase (173 aa).

A divalent metal cation is bound by residues Asp-17 and His-19. 4-CDP-2-C-methyl-D-erythritol 2-phosphate is bound by residues 17 to 19 (DVH) and 49 to 50 (HS). An a divalent metal cation-binding site is contributed by His-57. Residues 76–80 (FPNTD), 147–150 (TTTE), and Arg-157 contribute to the 4-CDP-2-C-methyl-D-erythritol 2-phosphate site.

The protein belongs to the IspF family. Homotrimer. A divalent metal cation is required as a cofactor.

The enzyme catalyses 4-CDP-2-C-methyl-D-erythritol 2-phosphate = 2-C-methyl-D-erythritol 2,4-cyclic diphosphate + CMP. It functions in the pathway isoprenoid biosynthesis; isopentenyl diphosphate biosynthesis via DXP pathway; isopentenyl diphosphate from 1-deoxy-D-xylulose 5-phosphate: step 4/6. In terms of biological role, involved in the biosynthesis of isopentenyl diphosphate (IPP) and dimethylallyl diphosphate (DMAPP), two major building blocks of isoprenoid compounds. Catalyzes the conversion of 4-diphosphocytidyl-2-C-methyl-D-erythritol 2-phosphate (CDP-ME2P) to 2-C-methyl-D-erythritol 2,4-cyclodiphosphate (ME-CPP) with a corresponding release of cytidine 5-monophosphate (CMP). The protein is 2-C-methyl-D-erythritol 2,4-cyclodiphosphate synthase of Ehrlichia ruminantium (strain Gardel).